Consider the following 106-residue polypeptide: Starvation responsive small protein A (106 aa).

The chain crosses the membrane as a helical span at residues 15–32; the sequence is ILLVNAGLISAYGVRIIF.

Its subcellular location is the cell membrane. Functionally, involved in starvation response and aggregation stage of the life cycle. May be involved in fruiting body morphogenesis and spore formation. The protein is Starvation responsive small protein A of Dictyostelium discoideum (Social amoeba).